We begin with the raw amino-acid sequence, 534 residues long: Melanopsin-B (534 aa).

The Extracellular segment spans residues 1 to 32 (MDLGKTVEYGTHRQDAIAQIDVPDQVLYTIGS). The chain crosses the membrane as a helical span at residues 33–53 (FILIIGSVGIIGNMLVLYAFY). The Cytoplasmic portion of the chain corresponds to 54-64 (RNKKLRTAPNY). Residues 65 to 85 (FIINLAISDFLMSATQAPVCF) form a helical membrane-spanning segment. Over 86 to 102 (LSSLHREWILGDIGCNV) the chain is Extracellular. C100 and C178 form a disulfide bridge. A helical transmembrane segment spans residues 103–123 (YAFCGALFGITSMMTLLAISI). Residues 124-146 (NRYIVITKPLQSIQWSSKKRTSQ) are Cytoplasmic-facing. The chain crosses the membrane as a helical span at residues 147–167 (IIVLVWMYSLMWSLAPLLGWS). At 168 to 198 (SYVPEGLRISCTWDYVTSTMSNRSYTMMLCC) the chain is on the extracellular side. N189 is a glycosylation site (N-linked (GlcNAc...) asparagine). Residues 199-219 (CVFFIPLIVISHCYLFMFLAI) form a helical membrane-spanning segment. Residues 220–250 (RSTGRNVQKLGSYGRQSFLSQSMKNEWKMAK) are Cytoplasmic-facing. A helical transmembrane segment spans residues 251–271 (IAFVIIIVFVLSWSPYACVTL). At 272–286 (IAWAGHGKSLTPYSK) the chain is on the extracellular side. The chain crosses the membrane as a helical span at residues 287 to 307 (TVPAVIAKASAIYNPIIYGII). N6-(retinylidene)lysine is present on K294. The Cytoplasmic portion of the chain corresponds to 308 to 534 (HPKYRETIHK…LYEVVERFLS (227 aa)). The disordered stretch occupies residues 478-501 (SNISETKEEHDNNSEEKSKRTEEE). The segment covering 482–499 (ETKEEHDNNSEEKSKRTE) has biased composition (basic and acidic residues).

Belongs to the G-protein coupled receptor 1 family. Opsin subfamily. Highest level in the iris, high level in the inner nuclear layer, possibly in horizontal cells, and lowest level in retinal pigment epithelium. Expressed in melanophore cells of the skin.

Its subcellular location is the cell membrane. Photoreceptor implicated in non-image-forming responses to light. May be able to isomerize covalently bound all-trans retinal back to 11-cis retinal. The sequence is that of Melanopsin-B from Xenopus laevis (African clawed frog).